Consider the following 428-residue polypeptide: Putative zinc metalloprotease SAS1196 (428 aa).

His21 provides a ligand contact to Zn(2+). Glu22 is an active-site residue. Zn(2+) is bound at residue His25. A run of 4 helical transmembrane segments spans residues 172 to 194 (FLTL…IGLA), 309 to 331 (GSTL…GFSF), 352 to 374 (IISL…LIPI), and 401 to 420 (TTII…LVTW). A PDZ domain is found at 186 to 269 (ALVLFIGLAY…TKSVELTPKK (84 aa)).

Belongs to the peptidase M50B family. Zn(2+) serves as cofactor.

Its subcellular location is the cell membrane. The chain is Putative zinc metalloprotease SAS1196 from Staphylococcus aureus (strain MSSA476).